The sequence spans 270 residues: Urease accessory protein UreD (270 aa).

Belongs to the UreD family. UreD, UreF and UreG form a complex that acts as a GTP-hydrolysis-dependent molecular chaperone, activating the urease apoprotein by helping to assemble the nickel containing metallocenter of UreC. The UreE protein probably delivers the nickel.

Its subcellular location is the cytoplasm. In terms of biological role, required for maturation of urease via the functional incorporation of the urease nickel metallocenter. This Actinobacillus pleuropneumoniae serotype 3 (strain JL03) protein is Urease accessory protein UreD.